The following is a 1274-amino-acid chain: Meiosis inhibitor protein 1 (1274 aa).

In terms of tissue distribution, expressed predominantly in testis. Weakly expressed in spleen and thymus. Expressed in the ovaries, Fallopian tubes and uterus.

Required for normal meiotic chromosome synapsis. May be involved in the formation of meiotic double-strand breaks (DSBs) in spermatocytes. In Homo sapiens (Human), this protein is Meiosis inhibitor protein 1.